The chain runs to 635 residues: Elongation factor 4 (635 aa).

Positions 11–193 (EKIRNFSIIA…QIVEKVPAPT (183 aa)) constitute a tr-type G domain. GTP contacts are provided by residues 23–28 (DHGKST) and 140–143 (NKID).

It belongs to the TRAFAC class translation factor GTPase superfamily. Classic translation factor GTPase family. LepA subfamily.

It is found in the cell membrane. The enzyme catalyses GTP + H2O = GDP + phosphate + H(+). Its function is as follows. Required for accurate and efficient protein synthesis under certain stress conditions. May act as a fidelity factor of the translation reaction, by catalyzing a one-codon backward translocation of tRNAs on improperly translocated ribosomes. Back-translocation proceeds from a post-translocation (POST) complex to a pre-translocation (PRE) complex, thus giving elongation factor G a second chance to translocate the tRNAs correctly. Binds to ribosomes in a GTP-dependent manner. The protein is Elongation factor 4 of Streptococcus pyogenes serotype M12 (strain MGAS2096).